The primary structure comprises 279 residues: Large ribosomal subunit protein mL46 (279 aa).

An N6-acetyllysine modification is found at Lys230.

Belongs to the mitochondrion-specific ribosomal protein mL46 family. Component of the mitochondrial large ribosomal subunit (mt-LSU). Mature mammalian 55S mitochondrial ribosomes consist of a small (28S) and a large (39S) subunit. The 28S small subunit contains a 12S ribosomal RNA (12S mt-rRNA) and 30 different proteins. The 39S large subunit contains a 16S rRNA (16S mt-rRNA), a copy of mitochondrial valine transfer RNA (mt-tRNA(Val)), which plays an integral structural role, and 52 different proteins. mL46 is located at the central protuberance.

Its subcellular location is the mitochondrion. This is Large ribosomal subunit protein mL46 (MRPL46) from Homo sapiens (Human).